A 178-amino-acid chain; its full sequence is Ribosome maturation factor RimM (178 aa).

Residues 94–174 (KNEFFWFDLI…RIDVINSFDI (81 aa)) form the PRC barrel domain.

This sequence belongs to the RimM family. In terms of assembly, binds ribosomal protein uS19.

It is found in the cytoplasm. In terms of biological role, an accessory protein needed during the final step in the assembly of 30S ribosomal subunit, possibly for assembly of the head region. Essential for efficient processing of 16S rRNA. May be needed both before and after RbfA during the maturation of 16S rRNA. It has affinity for free ribosomal 30S subunits but not for 70S ribosomes. The sequence is that of Ribosome maturation factor RimM from Aliarcobacter butzleri (strain RM4018) (Arcobacter butzleri).